The sequence spans 65 residues: Neurotoxin BmK-M3 (65 aa).

Positions 2-64 (RDAYIAKPEN…VPIRVWGKCH (63 aa)) constitute an LCN-type CS-alpha/beta domain. 4 disulfides stabilise this stretch: Cys12–Cys63, Cys16–Cys36, Cys22–Cys46, and Cys26–Cys48.

This sequence belongs to the long (4 C-C) scorpion toxin superfamily. Sodium channel inhibitor family. Alpha subfamily. As to expression, expressed by the venom gland.

It localises to the secreted. Binds to sodium channels (Nav) and inhibits the inactivation of the activated channels, thereby blocking neuronal transmission. The protein is Neurotoxin BmK-M3 of Olivierus martensii (Manchurian scorpion).